Reading from the N-terminus, the 304-residue chain is ATP synthase gamma chain (304 aa).

The protein belongs to the ATPase gamma chain family. F-type ATPases have 2 components, CF(1) - the catalytic core - and CF(0) - the membrane proton channel. CF(1) has five subunits: alpha(3), beta(3), gamma(1), delta(1), epsilon(1). CF(0) has three main subunits: a, b and c.

The protein resides in the cell membrane. In terms of biological role, produces ATP from ADP in the presence of a proton gradient across the membrane. The gamma chain is believed to be important in regulating ATPase activity and the flow of protons through the CF(0) complex. The polypeptide is ATP synthase gamma chain (Mycobacterium marinum (strain ATCC BAA-535 / M)).